Here is a 776-residue protein sequence, read N- to C-terminus: Lysyl oxidase homolog 2 (776 aa).

An N-terminal signal peptide occupies residues 1–25 (MELHFGSCLSGCLALLVLLPSLSLA). 4 consecutive SRCR domains span residues 61-162 (VRLA…VVCS), 191-305 (IRPI…VSCV), 329-428 (VRLR…VRCN), and 438-546 (VRLN…VACS). Disulfide bonds link cysteine 87/cysteine 151, cysteine 100/cysteine 161, cysteine 131/cysteine 141, cysteine 221/cysteine 294, cysteine 234/cysteine 304, cysteine 268/cysteine 278, cysteine 354/cysteine 417, cysteine 367/cysteine 427, and cysteine 398/cysteine 408. Residue asparagine 267 is glycosylated (N-linked (GlcNAc...) asparagine). Asparagine 291 carries N-linked (GlcNAc...) asparagine glycosylation. A glycan (N-linked (GlcNAc...) asparagine) is linked at asparagine 458. 3 disulfides stabilise this stretch: cysteine 467-cysteine 532, cysteine 480-cysteine 545, and cysteine 514-cysteine 524. The lysyl-oxidase like stretch occupies residues 550–753 (PDLVLNAEIV…WMYNCHVGGA (204 aa)). Residues aspartate 551 and leucine 552 each contribute to the Ca(2+) site. 4 disulfides stabilise this stretch: cysteine 575–cysteine 627, cysteine 581–cysteine 697, cysteine 659–cysteine 675, and cysteine 665–cysteine 687. Cu cation-binding residues include histidine 628, histidine 630, and histidine 632. N-linked (GlcNAc...) asparagine glycosylation occurs at asparagine 646. Residues 655–691 (KASFCLEDTECEGDIQKSYECANFGEQGITMGCWDMY) constitute a cross-link (lysine tyrosylquinone (Lys-Tyr)). A 2',4',5'-topaquinone modification is found at tyrosine 691. Residues glutamate 724, aspartate 726, asparagine 729, and asparagine 730 each coordinate Ca(2+). Cysteine 734 and cysteine 748 form a disulfide bridge.

Belongs to the lysyl oxidase family. Component of some chromatin repressor complex. Interacts with SNAI1. Interacts with TAF10. Interacts with HSPA5. Interacts with EFEMP2. Requires Cu cation as cofactor. Lysine tyrosylquinone residue is required as a cofactor. The lysine tyrosylquinone cross-link (LTQ) is generated by condensation of the epsilon-amino group of a lysine with a topaquinone produced by oxidation of tyrosine. In terms of processing, N-glycosylated. N-glycosylation on Asn-458 and Asn-646 may be essential for proper folding and secretion; may be composed of a fucosylated carbohydrates attached to a trimannose N-linked glycan core. Ubiquitous. Highest expression in skin, lung and thymus. Present in chondrocytes: mainly expressed by chondrocytes in healing fractures and in epiphyseal growth plates (at protein level).

The protein localises to the secreted. The protein resides in the extracellular space. It localises to the extracellular matrix. It is found in the basement membrane. Its subcellular location is the nucleus. The protein localises to the chromosome. The protein resides in the endoplasmic reticulum. It catalyses the reaction L-lysyl-[protein] + O2 + H2O = (S)-2-amino-6-oxohexanoyl-[protein] + H2O2 + NH4(+). With respect to regulation, specifically inhibited by a mouse monoclonal antibody AB0023, inhibition occurs in a non-competitive manner. Its function is as follows. Mediates the post-translational oxidative deamination of lysine residues on target proteins leading to the formation of deaminated lysine (allysine). Acts as a transcription corepressor and specifically mediates deamination of trimethylated 'Lys-4' of histone H3 (H3K4me3), a specific tag for epigenetic transcriptional activation. Shows no activity against histone H3 when it is trimethylated on 'Lys-9' (H3K9me3) or 'Lys-27' (H3K27me3) or when 'Lys-4' is monomethylated (H3K4me1) or dimethylated (H3K4me2). Also mediates deamination of methylated TAF10, a member of the transcription factor IID (TFIID) complex, which induces release of TAF10 from promoters, leading to inhibition of TFIID-dependent transcription. LOXL2-mediated deamination of TAF10 results in transcriptional repression of genes required for embryonic stem cell pluripotency including POU5F1/OCT4, NANOG, KLF4 and SOX2. Involved in epithelial to mesenchymal transition (EMT) via interaction with SNAI1 and participates in repression of E-cadherin, probably by mediating deamination of histone H3. During EMT, involved with SNAI1 in negatively regulating pericentromeric heterochromatin transcription. SNAI1 recruits LOXL2 to pericentromeric regions to oxidize histone H3 and repress transcription which leads to release of heterochromatin component CBX5/HP1A, enabling chromatin reorganization and acquisition of mesenchymal traits. Interacts with the endoplasmic reticulum protein HSPA5 which activates the IRE1-XBP1 pathway of the unfolded protein response, leading to expression of several transcription factors involved in EMT and subsequent EMT induction. When secreted into the extracellular matrix, promotes cross-linking of extracellular matrix proteins by mediating oxidative deamination of peptidyl lysine residues in precursors to fibrous collagen and elastin. Acts as a regulator of sprouting angiogenesis, probably via collagen IV scaffolding. Acts as a regulator of chondrocyte differentiation, probably by regulating expression of factors that control chondrocyte differentiation. This Mus musculus (Mouse) protein is Lysyl oxidase homolog 2 (Loxl2).